The following is a 1317-amino-acid chain: Putative late blight resistance protein homolog R1B-14 (1317 aa).

Coiled coils occupy residues 419 to 442 (RYSD…ESLQ) and 535 to 556 (RMNE…RLLN). The region spanning 521–823 (TVITHTSSQL…SESFIKSSEG (303 aa)) is the NB-ARC domain. 568-575 (GMPGLGKT) lines the ATP pocket. LRR repeat units follow at residues 944–968 (FKFL…LFYL), 987–1015 (LWNL…IWDM), 1090–1114 (PIRL…ISAP), 1138–1161 (LKHL…KVSN), 1164–1186 (FPQL…ADDA), and 1187–1211 (FPNL…FMDI). Positions 1251 to 1317 (IKKMVLKFDI…VSKLRKRGML (67 aa)) constitute an HMA domain.

The protein belongs to the disease resistance NB-LRR family.

The protein resides in the cytoplasm. Its subcellular location is the membrane. Functionally, confers resistance to late blight (Phytophthora infestans) races carrying the avirulence gene Avr1. Resistance proteins guard the plant against pathogens that contain an appropriate avirulence protein via an indirect interaction with this avirulence protein. That triggers a defense system including the hypersensitive response, which restricts the pathogen growth. The sequence is that of Putative late blight resistance protein homolog R1B-14 (R1B-14) from Solanum demissum (Wild potato).